Consider the following 355-residue polypeptide: Heavy metal-associated isoprenylated plant protein 7 (355 aa).

The span at 1–58 (MGEEEKKPEAAEEKKMEEKKPEEKKEGEDKKVDAEKKGEDSDKKPQEGESNKDSKEDS) shows a compositional bias: basic and acidic residues. The segment at 1-74 (MGEEEKKPEA…APAPPPPPQE (74 aa)) is disordered. Residues 63 to 73 (PEAPAPPPPPQ) are compositionally biased toward pro residues. 2 HMA domains span residues 72-136 (PQEV…HRQV) and 170-234 (VVTV…KHAA). A metal cation is bound by residues cysteine 83 and cysteine 86. The disordered stretch occupies residues 132-157 (THRQVQLLSPIPPPPPPPEKKAEEDK). A metal cation-binding residues include cysteine 181 and cysteine 184. Residues 235-308 (IMKIDPPPPP…GGGEEEGKVV (74 aa)) form a disordered region. Residues 254 to 293 (EGEKKEEEKGEGESKGEEGKDDKAKTDEEKKEGDGGKGEG) show a composition bias toward basic and acidic residues. Cysteine 352 carries the cysteine methyl ester modification. Cysteine 352 carries the S-farnesyl cysteine lipid modification. Residues 353–355 (TVM) constitute a propeptide, removed in mature form.

The protein belongs to the HIPP family. Efficiently farnesylated in vitro.

Heavy-metal-binding protein. Binds zinc, copper and nickel in a reversible manner. The polypeptide is Heavy metal-associated isoprenylated plant protein 7 (Arabidopsis thaliana (Mouse-ear cress)).